We begin with the raw amino-acid sequence, 86 residues long: UPF0125 protein bbp_234 (86 aa).

This sequence belongs to the UPF0125 (RnfH) family.

The sequence is that of UPF0125 protein bbp_234 from Buchnera aphidicola subsp. Baizongia pistaciae (strain Bp).